We begin with the raw amino-acid sequence, 262 residues long: Enoyl-[acyl-carrier-protein] reductase [NADH] FabI (262 aa).

NAD(+)-binding positions include Gly-13, 19 to 20 (SI), Gln-40, 64 to 65 (DV), and Ile-92. Residue Ala-95 coordinates substrate. Active-site proton acceptor residues include Tyr-146 and Tyr-156. Residues Lys-163 and 192 to 196 (IRTLA) each bind NAD(+).

It belongs to the short-chain dehydrogenases/reductases (SDR) family. FabI subfamily. As to quaternary structure, homotetramer.

It carries out the reaction a 2,3-saturated acyl-[ACP] + NAD(+) = a (2E)-enoyl-[ACP] + NADH + H(+). It catalyses the reaction (2E)-butenoyl-[ACP] + NADH + H(+) = butanoyl-[ACP] + NAD(+). The catalysed reaction is (2E)-decenoyl-[ACP] + NADH + H(+) = decanoyl-[ACP] + NAD(+). The enzyme catalyses (2E)-hexadecenoyl-[ACP] + NADH + H(+) = hexadecanoyl-[ACP] + NAD(+). It carries out the reaction (2E,9Z)-hexadecadienoyl-[ACP] + NADH + H(+) = (9Z)-hexadecenoyl-[ACP] + NAD(+). It catalyses the reaction (2E)-5-methylhexenoyl-[ACP] + NADH + H(+) = 5-methylhexanoyl-[ACP] + NAD(+). The protein operates within lipid metabolism; fatty acid biosynthesis. It participates in cofactor biosynthesis; biotin biosynthesis. With respect to regulation, inhibited by diazaborines, triclosan (5-chloro-2-2,4-dichlorophenoxyphenol), 1,4-disubstituted imidazoles, 1,4-benzodiazepine derivatives, naphthyridinone derivatives, luteolin and curcumin. The antibiotic diazaborine interferes with the activity by binding to the protein and NAD. Its function is as follows. Catalyzes the reduction of a carbon-carbon double bond in an enoyl moiety that is covalently linked to an acyl carrier protein (ACP). Involved in the elongation cycle of fatty acid which are used in the lipid metabolism and in the biotin biosynthesis. The polypeptide is Enoyl-[acyl-carrier-protein] reductase [NADH] FabI (fabI) (Escherichia coli (strain K12)).